Reading from the N-terminus, the 458-residue chain is MNKVNPKNTSPVAPKKVFIKTYGCQMNVYDSQRMTDSLSSQGYVTTQTPNDADLILVNTCHIREKAAEKLYSDLGRLRVMRQERTPDKPLTVGVTGCVAQAEGSEILRRAPIVDLVIGPQMYHRLPELLEKAKQGKKIIETDYAVEDKFAHLPPHNKRAVRKRGVSAFLTVQEGCDKFCTFCVVPYTRGAEISRSVEQITEEARQLIEAGVKEITLLGQNVNGWHGQSADGKTWRLGDLLYHLAKLDGLKRLRYTTSHPRDMDDSLIAAHRDLDMLMPYLHLPVQSGSDRILKAMNRQHKSSYYLHLIEKIRAARPDIAFSGDFIVGFPGETDEDFEETIKLIQQVQYSSAYSFKYSPRPGTVGATMKNHVDESVKDARLQHLQVLLLEQQNTFLRSKIGQKTDVLIEKPGRHSGQMVGRSPWLLPVVVDTESSTGSVVEIHIKNASSNSFVGEMTNR.

The MTTase N-terminal domain occupies 15-134; sequence KKVFIKTYGC…LPELLEKAKQ (120 aa). [4Fe-4S] cluster contacts are provided by cysteine 24, cysteine 60, cysteine 97, cysteine 175, cysteine 179, and cysteine 182. Residues 161-395 enclose the Radical SAM core domain; it reads RKRGVSAFLT…LLLEQQNTFL (235 aa). Residues 396-457 form the TRAM domain; it reads RSKIGQKTDV…SNSFVGEMTN (62 aa).

This sequence belongs to the methylthiotransferase family. MiaB subfamily. In terms of assembly, monomer. Requires [4Fe-4S] cluster as cofactor.

It localises to the cytoplasm. It carries out the reaction N(6)-dimethylallyladenosine(37) in tRNA + (sulfur carrier)-SH + AH2 + 2 S-adenosyl-L-methionine = 2-methylsulfanyl-N(6)-dimethylallyladenosine(37) in tRNA + (sulfur carrier)-H + 5'-deoxyadenosine + L-methionine + A + S-adenosyl-L-homocysteine + 2 H(+). Its function is as follows. Catalyzes the methylthiolation of N6-(dimethylallyl)adenosine (i(6)A), leading to the formation of 2-methylthio-N6-(dimethylallyl)adenosine (ms(2)i(6)A) at position 37 in tRNAs that read codons beginning with uridine. The protein is tRNA-2-methylthio-N(6)-dimethylallyladenosine synthase of Bartonella tribocorum (strain CIP 105476 / IBS 506).